The primary structure comprises 336 residues: Phospho-N-acetylmuramoyl-pentapeptide-transferase (336 aa).

Transmembrane regions (helical) follow at residues 3-23, 52-72, 79-99, 123-143, 144-164, 175-195, 201-221, 227-247, 255-275, and 315-335; these read LSIM…PRFI, MGGT…SIIL, NLGA…IGFL, LIAG…SAIN, IFGF…FWVV, GIDG…GIIA, FDIL…FVFN, VFMG…ISIA, LFIG…VAYF, and VDAF…AILY.

This sequence belongs to the glycosyltransferase 4 family. MraY subfamily. It depends on Mg(2+) as a cofactor.

It is found in the cell membrane. It carries out the reaction UDP-N-acetyl-alpha-D-muramoyl-L-alanyl-gamma-D-glutamyl-L-lysyl-D-alanyl-D-alanine + di-trans,octa-cis-undecaprenyl phosphate = Mur2Ac(oyl-L-Ala-gamma-D-Glu-L-Lys-D-Ala-D-Ala)-di-trans,octa-cis-undecaprenyl diphosphate + UMP. It participates in cell wall biogenesis; peptidoglycan biosynthesis. Functionally, catalyzes the initial step of the lipid cycle reactions in the biosynthesis of the cell wall peptidoglycan: transfers peptidoglycan precursor phospho-MurNAc-pentapeptide from UDP-MurNAc-pentapeptide onto the lipid carrier undecaprenyl phosphate, yielding undecaprenyl-pyrophosphoryl-MurNAc-pentapeptide, known as lipid I. This is Phospho-N-acetylmuramoyl-pentapeptide-transferase from Streptococcus agalactiae serotype Ia (strain ATCC 27591 / A909 / CDC SS700).